Here is a 706-residue protein sequence, read N- to C-terminus: Gamma-adducin (706 aa).

The segment covering 1-10 has biased composition (polar residues); sequence MSSDASQGVI. The interval 1–20 is disordered; it reads MSSDASQGVITTPPPPSMPH. Serine 2 carries the N-acetylserine modification. A phosphoserine mark is found at serine 42, serine 64, serine 402, serine 414, serine 423, serine 442, and serine 461. Disordered stretches follow at residues 471–497, 535–555, 575–610, and 666–706; these read AEDS…LNTN, PSTM…NPFS, GLED…KLEE, and EKIE…KVEA. Lysine 484 participates in a covalent cross-link: Glycyl lysine isopeptide (Lys-Gly) (interchain with G-Cter in SUMO2). A phosphoserine mark is found at serine 585, serine 590, serine 673, serine 677, serine 679, serine 681, and serine 683. The span at 589 to 602 shows a compositional bias: low complexity; it reads SSVSQIQSQTQSPQ. Residues 682 to 706 are compositionally biased toward basic residues; the sequence is PSKKKKKFRTPSFLKKNKKKEKVEA. The interaction with calmodulin stretch occupies residues 684-701; it reads KKKKKFRTPSFLKKNKKK.

It belongs to the aldolase class II family. Adducin subfamily. Heterodimer of an alpha and a gamma subunit. Post-translationally, sumoylated. In terms of processing, proteolytically cleaved by asparagine endopeptidase (AEP) into 2 fragments. Overexpression of the 1-357 fragment induces neuronal apoptosis, and overexpression of either 1-357 or 358-706 fragment increases the degeneration of dendritic spines. Overexpression of the 1-357 fragment impairs neurite outgrowth by downregulating the expression of Rac2, and induces synaptic dysfunction and cognitive impairments in tau P301S transgenic mice, a mouse model for Alzheimer disease (AD). As to expression, ubiquitously expressed. In terms of tissue distribution, cleavage fragment 1-357 is abundantly expressed in the brain of patients with Alzheimer disease (AD), but hardly detectable in age-matched control individuals (at protein level).

Its subcellular location is the cytoplasm. The protein localises to the cytoskeleton. It localises to the cell membrane. Membrane-cytoskeleton-associated protein that promotes the assembly of the spectrin-actin network. Plays a role in actin filament capping. Binds to calmodulin. Involved in myogenic reactivity of the renal afferent arteriole (Af-art), renal interlobular arteries and middle cerebral artery (MCA) to increased perfusion pressure. Involved in regulation of potassium channels in the vascular smooth muscle cells (VSMCs) of the Af-art and MCA ex vivo. Involved in regulation of glomerular capillary pressure, glomerular filtration rate (GFR) and glomerular nephrin expression in response to hypertension. Involved in renal blood flow (RBF) autoregulation. Plays a role in podocyte structure and function. Regulates globular monomer actin (G-actin) and filamentous polymer actin (F-actin) ratios in the primary podocytes affecting actin cytoskeleton organization. Regulates expression of synaptopodin, RhoA, Rac1 and CDC42 in the renal cortex and the primary podocytes. Regulates expression of nephrin in the glomeruli and in the primary podocytes, expression of nephrin and podocinin in the renal cortex, and expression of focal adhesion proteins integrin alpha-3 and integrin beta-1 in the glomeruli. Involved in cell migration and cell adhesion of podocytes, and in podocyte foot process effacement. Regulates expression of profibrotics markers MMP2, MMP9, TGF beta-1, tubular tight junction protein E-cadherin, and mesenchymal markers vimentin and alpha-SMA. Promotes the growth of neurites. The chain is Gamma-adducin (ADD3) from Homo sapiens (Human).